The following is a 148-amino-acid chain: Lysozyme C (148 aa).

The first 18 residues, 1–18, serve as a signal peptide directing secretion; that stretch reads MKVLVILGLVLLSVMVQG. In terms of domain architecture, C-type lysozyme spans 19 to 148; the sequence is KVFERCELAR…VSQYVQGCGV (130 aa). 4 disulfide bridges follow: cysteine 24/cysteine 146, cysteine 48/cysteine 134, cysteine 83/cysteine 99, and cysteine 95/cysteine 113. Catalysis depends on residues glutamate 53 and aspartate 71.

Belongs to the glycosyl hydrolase 22 family. Monomer.

The protein localises to the secreted. The enzyme catalyses Hydrolysis of (1-&gt;4)-beta-linkages between N-acetylmuramic acid and N-acetyl-D-glucosamine residues in a peptidoglycan and between N-acetyl-D-glucosamine residues in chitodextrins.. Lysozymes have primarily a bacteriolytic function; those in tissues and body fluids are associated with the monocyte-macrophage system and enhance the activity of immunoagents. In Saimiri sciureus (Common squirrel monkey), this protein is Lysozyme C (LYZ).